A 334-amino-acid polypeptide reads, in one-letter code: D-alanine--D-alanine ligase (334 aa).

The ATP-grasp domain maps to 124–329; sequence KMWFSALGIP…FAQYLSGNIL (206 aa). 154–209 contributes to the ATP binding site; sequence ALAKWGSIFIKAASQGSSVGCYRVDSIEQLASSLEEAFTFSPYVVIEKTITARELE. Mg(2+) contacts are provided by Asp283, Glu296, and Asn298.

Belongs to the D-alanine--D-alanine ligase family. Mg(2+) is required as a cofactor. The cofactor is Mn(2+).

It is found in the cytoplasm. It carries out the reaction 2 D-alanine + ATP = D-alanyl-D-alanine + ADP + phosphate + H(+). The protein operates within cell wall biogenesis; peptidoglycan biosynthesis. Cell wall formation. The polypeptide is D-alanine--D-alanine ligase (Shewanella pealeana (strain ATCC 700345 / ANG-SQ1)).